We begin with the raw amino-acid sequence, 334 residues long: FAD:protein FMN transferase (334 aa).

A signal peptide spans 1–16 (MRNWLVALASLLLLAG). Cys17 is lipidated: N-palmitoyl cysteine. Residue Cys17 is the site of S-diacylglycerol cysteine attachment. Residues Met31, Tyr69, 110-112 (ALD), and Asp168 each bind FAD. Thr171 serves as a coordination point for Mg(2+). Positions 174 and 259 each coordinate FAD. Asp285 and Thr289 together coordinate Mg(2+).

This sequence belongs to the ApbE family. The cofactor is Mg(2+).

It localises to the cell inner membrane. The enzyme catalyses L-threonyl-[protein] + FAD = FMN-L-threonyl-[protein] + AMP + H(+). Its function is as follows. Flavin transferase that catalyzes the transfer of the FMN moiety of FAD and its covalent binding to the hydroxyl group of a threonine residue in a target flavoprotein such as NqrB and NqrC, two subunits of the NQR complex. Cannot use directly FMN instead of FAD as substrate. The sequence is that of FAD:protein FMN transferase from Vibrio cholerae serotype O1 (strain ATCC 39541 / Classical Ogawa 395 / O395).